The primary structure comprises 156 residues: Regulatory protein RecX (156 aa).

The protein belongs to the RecX family.

It localises to the cytoplasm. Modulates RecA activity. This Pseudomonas putida (strain W619) protein is Regulatory protein RecX.